We begin with the raw amino-acid sequence, 202 residues long: Glycerol-3-phosphate acyltransferase (202 aa).

The next 5 helical transmembrane spans lie at 3–23, 87–107, 118–138, 144–164, and 167–187; these read NLIIYAFIYLLSSIPFGLILA, LLWSVAVLAILGHCFSIYLLF, GAMIVLLPLEVLTAFIVWVVI, ISSLASLAALLAFVVSSFIFN, and LEIHTHAPVFIIAFIIVYKHL.

It belongs to the PlsY family. Probably interacts with PlsX.

It localises to the cell inner membrane. The catalysed reaction is an acyl phosphate + sn-glycerol 3-phosphate = a 1-acyl-sn-glycero-3-phosphate + phosphate. Its pathway is lipid metabolism; phospholipid metabolism. Functionally, catalyzes the transfer of an acyl group from acyl-phosphate (acyl-PO(4)) to glycerol-3-phosphate (G3P) to form lysophosphatidic acid (LPA). This enzyme utilizes acyl-phosphate as fatty acyl donor, but not acyl-CoA or acyl-ACP. The protein is Glycerol-3-phosphate acyltransferase of Campylobacter jejuni (strain RM1221).